The sequence spans 283 residues: Gap junction beta-1 protein (283 aa).

Residues 1–22 (MNWTGLYTLLSGVNRHSTAIGR) lie on the Cytoplasmic side of the membrane. Residues 23-45 (VWLSVIFIFRIMVLVVAAESVWG) form a helical membrane-spanning segment. At 46-75 (DEKSSFICNTLQPGCNSVCYDQFFPISHVR) the chain is on the extracellular side. A helical membrane pass occupies residues 76-95 (LWSLQLILVSTPALLVAMHV). Over 96–130 (AHQQHIEKKMLRLEGHGDPLHLEEVKRHKVHISGT) the chain is Cytoplasmic. A helical transmembrane segment spans residues 131 to 153 (LWWAYVISVVFRLLFEAVFMYVF). The Extracellular segment spans residues 154-191 (YLLYPGYAMVRLVKCDVYPCPNTVDCFVSRPTEKTVFT). A helical transmembrane segment spans residues 192 to 214 (VFMLAASGICIILNVAEVVYLII). Residues 215–283 (RACARRAQRR…AEKSDRCSAC (69 aa)) are Cytoplasmic-facing. Residues Ser-233, Ser-258, Ser-266, and Ser-277 each carry the phosphoserine modification.

Belongs to the connexin family. Beta-type (group I) subfamily. As to quaternary structure, a connexon is composed of a hexamer of connexins. Interacts with CNST.

Its subcellular location is the cell membrane. It is found in the cell junction. The protein localises to the gap junction. One gap junction consists of a cluster of closely packed pairs of transmembrane channels, the connexons, through which materials of low MW diffuse from one cell to a neighboring cell. In Macaca fascicularis (Crab-eating macaque), this protein is Gap junction beta-1 protein (GJB1).